The chain runs to 87 residues: Small ribosomal subunit protein uS15c (87 aa).

The protein belongs to the universal ribosomal protein uS15 family. As to quaternary structure, part of the 30S ribosomal subunit.

Its subcellular location is the plastid. The protein localises to the chloroplast. The sequence is that of Small ribosomal subunit protein uS15c (rps15) from Atropa belladonna (Belladonna).